Here is an 89-residue protein sequence, read N- to C-terminus: Small ribosomal subunit protein uS15 (89 aa).

Belongs to the universal ribosomal protein uS15 family. Part of the 30S ribosomal subunit. Forms a bridge to the 50S subunit in the 70S ribosome, contacting the 23S rRNA.

Its function is as follows. One of the primary rRNA binding proteins, it binds directly to 16S rRNA where it helps nucleate assembly of the platform of the 30S subunit by binding and bridging several RNA helices of the 16S rRNA. In terms of biological role, forms an intersubunit bridge (bridge B4) with the 23S rRNA of the 50S subunit in the ribosome. The polypeptide is Small ribosomal subunit protein uS15 (Azobacteroides pseudotrichonymphae genomovar. CFP2).